The chain runs to 75 residues: Protein RegB (75 aa).

Functionally, required for optimal exotoxin A production. The sequence is that of Protein RegB (regB) from Pseudomonas aeruginosa (strain ATCC 15692 / DSM 22644 / CIP 104116 / JCM 14847 / LMG 12228 / 1C / PRS 101 / PAO1).